The primary structure comprises 732 residues: Prolyl tripeptidyl peptidase (732 aa).

The N-terminal stretch at 1 to 24 (MKKTIFQQLFLSVCALTVALPCSA) is a signal peptide. Residues S603, D678, and H710 each act as charge relay system in the active site.

This sequence belongs to the peptidase S9B family. The N-terminus is blocked.

The catalysed reaction is Hydrolysis of Xaa-Xaa-Pro-|-Yaa- releasing the N-terminal tripeptide of a peptide with Pro as the third residue (position P1) and where Yaa is not proline.. With respect to regulation, strongly inhibited by diisopropyl fluorophosphate and Pefabloc. Weakly inhibited by 3,4-dichloroisocumarin. Not inhibited by phenylmethylsulfonyl fluoride, leupeptin, antipain or prolinal. Activated by iodoacetamide. Its function is as follows. Serine proteinase. Releases tripeptides from the free amino terminus of proteins. Has a requirement for Pro in the P1 position, but is inactivated by Pro in the P1' position. This Porphyromonas gingivalis (strain ATCC BAA-308 / W83) protein is Prolyl tripeptidyl peptidase.